The sequence spans 864 residues: Alanine--tRNA ligase (864 aa).

Zn(2+) is bound by residues His534, His538, Cys639, and His643.

The protein belongs to the class-II aminoacyl-tRNA synthetase family. Zn(2+) serves as cofactor.

It is found in the cytoplasm. It catalyses the reaction tRNA(Ala) + L-alanine + ATP = L-alanyl-tRNA(Ala) + AMP + diphosphate. Functionally, catalyzes the attachment of alanine to tRNA(Ala) in a two-step reaction: alanine is first activated by ATP to form Ala-AMP and then transferred to the acceptor end of tRNA(Ala). Also edits incorrectly charged Ser-tRNA(Ala) and Gly-tRNA(Ala) via its editing domain. The sequence is that of Alanine--tRNA ligase from Aster yellows witches'-broom phytoplasma (strain AYWB).